The following is a 1072-amino-acid chain: Guanylyl cyclase C (1072 aa).

The N-terminal stretch at 1 to 22 (MTSLLGLAVRLLLFQPTLMFWA) is a signal peptide. Topologically, residues 23 to 429 (SQVRQKCHNG…PNDVPGLGPQ (407 aa)) are extracellular. Asparagine 31, asparagine 74, asparagine 78, asparagine 187, asparagine 194, asparagine 306, and asparagine 401 each carry an N-linked (GlcNAc...) asparagine glycan. The helical transmembrane segment at 430 to 453 (ILMIAVFTLTGIVVVLLLIALLVL) threads the bilayer. Topologically, residues 454-1072 (RKYRRDHELR…NNSDHDSTYF (619 aa)) are cytoplasmic. The Protein kinase domain maps to 488-748 (LKIDDDRRRD…KIESTLAKIF (261 aa)). The Guanylate cyclase domain maps to 823 to 953 (TIYFSDIVGF…DTVNTASRME (131 aa)).

This sequence belongs to the adenylyl cyclase class-4/guanylyl cyclase family. Homotrimer. Interacts via its C-terminal region with PDZK2. Interacts with the lectin chaperone VIP36. In terms of processing, glycosylation at Asn-74 and/or Asn-78 is required for interaction with VIP36 while glycosylation at Asn-401 modulates ligand-mediated GC-C activation.

Its subcellular location is the cell membrane. The protein localises to the endoplasmic reticulum membrane. It carries out the reaction GTP = 3',5'-cyclic GMP + diphosphate. Guanylyl cyclase that catalyzes synthesis of cyclic GMP (cGMP) from GTP. Receptor for the E.coli heat-stable enterotoxin; E.coli enterotoxin markedly stimulates the accumulation of cGMP in mammalian cells expressing GUCY2C. In Rattus norvegicus (Rat), this protein is Guanylyl cyclase C (Gucy2c).